We begin with the raw amino-acid sequence, 326 residues long: tRNA-modifying protein YgfZ (326 aa).

Folate is bound by residues Trp27 and Trp189.

It belongs to the tRNA-modifying YgfZ family.

Its subcellular location is the cytoplasm. Its function is as follows. Folate-binding protein involved in regulating the level of ATP-DnaA and in the modification of some tRNAs. It is probably a key factor in regulatory networks that act via tRNA modification, such as initiation of chromosomal replication. This is tRNA-modifying protein YgfZ from Escherichia coli O157:H7 (strain EC4115 / EHEC).